The primary structure comprises 345 residues: S-adenosylmethionine:tRNA ribosyltransferase-isomerase (345 aa).

The protein belongs to the QueA family. As to quaternary structure, monomer.

It localises to the cytoplasm. It carries out the reaction 7-aminomethyl-7-carbaguanosine(34) in tRNA + S-adenosyl-L-methionine = epoxyqueuosine(34) in tRNA + adenine + L-methionine + 2 H(+). Its pathway is tRNA modification; tRNA-queuosine biosynthesis. In terms of biological role, transfers and isomerizes the ribose moiety from AdoMet to the 7-aminomethyl group of 7-deazaguanine (preQ1-tRNA) to give epoxyqueuosine (oQ-tRNA). This chain is S-adenosylmethionine:tRNA ribosyltransferase-isomerase, found in Shewanella baltica (strain OS155 / ATCC BAA-1091).